Consider the following 197-residue polypeptide: Probable chorismate pyruvate-lyase (197 aa).

Substrate-binding residues include Arg77, Leu115, and Glu176.

This sequence belongs to the UbiC family.

It localises to the cytoplasm. It catalyses the reaction chorismate = 4-hydroxybenzoate + pyruvate. It participates in cofactor biosynthesis; ubiquinone biosynthesis. Removes the pyruvyl group from chorismate, with concomitant aromatization of the ring, to provide 4-hydroxybenzoate (4HB) for the ubiquinone pathway. In Burkholderia ambifaria (strain ATCC BAA-244 / DSM 16087 / CCUG 44356 / LMG 19182 / AMMD) (Burkholderia cepacia (strain AMMD)), this protein is Probable chorismate pyruvate-lyase.